A 927-amino-acid polypeptide reads, in one-letter code: Isoleucine--tRNA ligase (927 aa).

The 'HIGH' region signature appears at 57-67; it reads PFANGNIHMGH. Glu-553 contacts L-isoleucyl-5'-AMP. The short motif at 594-598 is the 'KMSKS' region element; that stretch reads KMSKS. Position 597 (Lys-597) interacts with ATP. Positions 886, 889, 906, and 909 each coordinate Zn(2+).

The protein belongs to the class-I aminoacyl-tRNA synthetase family. IleS type 1 subfamily. Monomer. Zn(2+) is required as a cofactor.

The protein resides in the cytoplasm. The enzyme catalyses tRNA(Ile) + L-isoleucine + ATP = L-isoleucyl-tRNA(Ile) + AMP + diphosphate. Functionally, catalyzes the attachment of isoleucine to tRNA(Ile). As IleRS can inadvertently accommodate and process structurally similar amino acids such as valine, to avoid such errors it has two additional distinct tRNA(Ile)-dependent editing activities. One activity is designated as 'pretransfer' editing and involves the hydrolysis of activated Val-AMP. The other activity is designated 'posttransfer' editing and involves deacylation of mischarged Val-tRNA(Ile). The polypeptide is Isoleucine--tRNA ligase (Lactobacillus helveticus (strain DPC 4571)).